A 296-amino-acid chain; its full sequence is Fructose-bisphosphate aldolase class 1 (296 aa).

Glutamate 175 functions as the Proton acceptor in the catalytic mechanism. Lysine 212 (schiff-base intermediate with dihydroxyacetone-P) is an active-site residue.

It belongs to the class I fructose-bisphosphate aldolase family.

The catalysed reaction is beta-D-fructose 1,6-bisphosphate = D-glyceraldehyde 3-phosphate + dihydroxyacetone phosphate. It functions in the pathway carbohydrate degradation; glycolysis; D-glyceraldehyde 3-phosphate and glycerone phosphate from D-glucose: step 4/4. This is Fructose-bisphosphate aldolase class 1 from Staphylococcus epidermidis (strain ATCC 35984 / DSM 28319 / BCRC 17069 / CCUG 31568 / BM 3577 / RP62A).